Consider the following 293-residue polypeptide: Ribosomal RNA small subunit methyltransferase A (293 aa).

Residues Asn29, Leu31, Gly56, Glu77, Asp102, and Asn127 each contribute to the S-adenosyl-L-methionine site.

The protein belongs to the class I-like SAM-binding methyltransferase superfamily. rRNA adenine N(6)-methyltransferase family. RsmA subfamily.

Its subcellular location is the cytoplasm. The enzyme catalyses adenosine(1518)/adenosine(1519) in 16S rRNA + 4 S-adenosyl-L-methionine = N(6)-dimethyladenosine(1518)/N(6)-dimethyladenosine(1519) in 16S rRNA + 4 S-adenosyl-L-homocysteine + 4 H(+). Specifically dimethylates two adjacent adenosines (A1518 and A1519) in the loop of a conserved hairpin near the 3'-end of 16S rRNA in the 30S particle. May play a critical role in biogenesis of 30S subunits. This is Ribosomal RNA small subunit methyltransferase A from Geobacillus kaustophilus (strain HTA426).